Reading from the N-terminus, the 212-residue chain is Shuttling pre-60S factor ECM1 (212 aa).

Disordered regions lie at residues 28 to 48 (KISK…EVKD) and 188 to 212 (SLAE…DVEE). Ser188 bears the Phosphoserine mark. Residues 191–201 (EDNTVQKTPTN) show a composition bias toward polar residues.

It belongs to the ECM1 family. As to quaternary structure, associates with the pre-60S ribosomal particle and the nucleopore complex.

It localises to the nucleus. The protein resides in the nucleolus. The protein localises to the cytoplasm. Pre-ribosomal factor involved in 60S ribosomal protein subunit export from the nucleus. In Saccharomyces cerevisiae (strain ATCC 204508 / S288c) (Baker's yeast), this protein is Shuttling pre-60S factor ECM1 (ECM1).